The following is a 275-amino-acid chain: Dermonecrotic toxin LhSicTox-alphaVI1i (275 aa).

His-5 is an active-site residue. Positions 25 and 27 each coordinate Mg(2+). His-41 acts as the Nucleophile in catalysis. 2 cysteine pairs are disulfide-bonded: Cys-45/Cys-51 and Cys-47/Cys-192. A Mg(2+)-binding site is contributed by Asp-85.

Belongs to the arthropod phospholipase D family. Class II subfamily. It depends on Mg(2+) as a cofactor. As to expression, expressed by the venom gland.

Its subcellular location is the secreted. It catalyses the reaction an N-(acyl)-sphingosylphosphocholine = an N-(acyl)-sphingosyl-1,3-cyclic phosphate + choline. The enzyme catalyses an N-(acyl)-sphingosylphosphoethanolamine = an N-(acyl)-sphingosyl-1,3-cyclic phosphate + ethanolamine. The catalysed reaction is a 1-acyl-sn-glycero-3-phosphocholine = a 1-acyl-sn-glycero-2,3-cyclic phosphate + choline. It carries out the reaction a 1-acyl-sn-glycero-3-phosphoethanolamine = a 1-acyl-sn-glycero-2,3-cyclic phosphate + ethanolamine. In terms of biological role, dermonecrotic toxins cleave the phosphodiester linkage between the phosphate and headgroup of certain phospholipids (sphingolipid and lysolipid substrates), forming an alcohol (often choline) and a cyclic phosphate. This toxin acts on sphingomyelin (SM). It may also act on ceramide phosphoethanolamine (CPE), lysophosphatidylcholine (LPC) and lysophosphatidylethanolamine (LPE), but not on lysophosphatidylserine (LPS), and lysophosphatidylglycerol (LPG). It acts by transphosphatidylation, releasing exclusively cyclic phosphate products as second products. Induces dermonecrosis, hemolysis, increased vascular permeability, edema, inflammatory response, and platelet aggregation. The polypeptide is Dermonecrotic toxin LhSicTox-alphaVI1i (Loxosceles hirsuta (Recluse spider)).